A 141-amino-acid polypeptide reads, in one-letter code: Large ribosomal subunit protein uL13 (141 aa).

The protein belongs to the universal ribosomal protein uL13 family. As to quaternary structure, part of the 50S ribosomal subunit.

Its function is as follows. This protein is one of the early assembly proteins of the 50S ribosomal subunit, although it is not seen to bind rRNA by itself. It is important during the early stages of 50S assembly. The chain is Large ribosomal subunit protein uL13 from Helicobacter pylori (strain Shi470).